Consider the following 68-residue polypeptide: U1-agatoxin-Ta1c (68 aa).

Residues 1–17 form the signal peptide; sequence MKLQLMICLVLLPCFFC. 3 cysteine pairs are disulfide-bonded: Cys23–Cys53, Cys39–Cys49, and Cys42–Cys62. Residue Lys67 is modified to Lysine amide.

The protein belongs to the helical arthropod-neuropeptide-derived (HAND) family. In terms of tissue distribution, expressed by the venom gland.

Its subcellular location is the secreted. Its function is as follows. Toxin that paralyzes insects. May have a direct effect on the insect central nervous system. The polypeptide is U1-agatoxin-Ta1c (Eratigena agrestis (Hobo spider)).